The sequence spans 227 residues: Cytochrome c oxidase subunit 2 (227 aa).

The Mitochondrial intermembrane portion of the chain corresponds to 1-14; it reads MAYPHQLGFQDATS. Residues 15-45 form a helical membrane-spanning segment; the sequence is PIMEELLSFHDHTLMIVFLISSLVLYLISLM. Over 46 to 59 the chain is Mitochondrial matrix; that stretch reads LTTKLTHTSTMDAQ. A helical membrane pass occupies residues 60–87; sequence EVETVWTILPAIILIMIALPSLRILYMM. Over 88–227 the chain is Mitochondrial intermembrane; sequence DEINNPLLTV…SFENWTTSMT (140 aa). Cu cation-binding residues include His161, Cys196, Glu198, Cys200, His204, and Met207. Mg(2+) is bound at residue Glu198.

The protein belongs to the cytochrome c oxidase subunit 2 family. Component of the cytochrome c oxidase (complex IV, CIV), a multisubunit enzyme composed of 14 subunits. The complex is composed of a catalytic core of 3 subunits MT-CO1, MT-CO2 and MT-CO3, encoded in the mitochondrial DNA, and 11 supernumerary subunits COX4I, COX5A, COX5B, COX6A, COX6B, COX6C, COX7A, COX7B, COX7C, COX8 and NDUFA4, which are encoded in the nuclear genome. The complex exists as a monomer or a dimer and forms supercomplexes (SCs) in the inner mitochondrial membrane with NADH-ubiquinone oxidoreductase (complex I, CI) and ubiquinol-cytochrome c oxidoreductase (cytochrome b-c1 complex, complex III, CIII), resulting in different assemblies (supercomplex SCI(1)III(2)IV(1) and megacomplex MCI(2)III(2)IV(2)). Found in a complex with TMEM177, COA6, COX18, COX20, SCO1 and SCO2. Interacts with TMEM177 in a COX20-dependent manner. Interacts with COX20. Interacts with COX16. Cu cation serves as cofactor.

The protein localises to the mitochondrion inner membrane. It carries out the reaction 4 Fe(II)-[cytochrome c] + O2 + 8 H(+)(in) = 4 Fe(III)-[cytochrome c] + 2 H2O + 4 H(+)(out). Functionally, component of the cytochrome c oxidase, the last enzyme in the mitochondrial electron transport chain which drives oxidative phosphorylation. The respiratory chain contains 3 multisubunit complexes succinate dehydrogenase (complex II, CII), ubiquinol-cytochrome c oxidoreductase (cytochrome b-c1 complex, complex III, CIII) and cytochrome c oxidase (complex IV, CIV), that cooperate to transfer electrons derived from NADH and succinate to molecular oxygen, creating an electrochemical gradient over the inner membrane that drives transmembrane transport and the ATP synthase. Cytochrome c oxidase is the component of the respiratory chain that catalyzes the reduction of oxygen to water. Electrons originating from reduced cytochrome c in the intermembrane space (IMS) are transferred via the dinuclear copper A center (CU(A)) of subunit 2 and heme A of subunit 1 to the active site in subunit 1, a binuclear center (BNC) formed by heme A3 and copper B (CU(B)). The BNC reduces molecular oxygen to 2 water molecules using 4 electrons from cytochrome c in the IMS and 4 protons from the mitochondrial matrix. The polypeptide is Cytochrome c oxidase subunit 2 (MT-CO2) (Georychus capensis (Cape mole rat)).